A 2189-amino-acid chain; its full sequence is Chromatin modification-related protein eaf-1 (2189 aa).

3 disordered regions span residues 183–400, 415–438, and 477–601; these read VQGS…SGAE, VIGK…TQHP, and EVAK…PPGL. Over residues 234–253 the composition is skewed to low complexity; the sequence is PTPQTVAPPATAPTSTTKTA. A compositionally biased stretch (basic and acidic residues) spans 260–277; the sequence is AGPKDDTVSRGDAEEKAR. 3 stretches are compositionally biased toward polar residues: residues 281-293, 300-312, and 319-333; these read TITS…SNGD, TLSS…QSAP, and ASAS…SQSF. The segment covering 336–349 has biased composition (basic and acidic residues); sequence PVSRPEQELRRATT. Positions 534-543 are enriched in low complexity; sequence QPQPSSTAPS. The span at 573 to 583 shows a compositional bias: polar residues; it reads ETQARTSQSSH. The HSA domain occupies 722-797; it reads PVRCLEPARP…PPVRAVDNAD (76 aa). The region spanning 985 to 1045 is the Myb-like domain; it reads FESRIASQWT…ECFERWVNLE (61 aa). Low complexity-rich tracts occupy residues 1320 to 1330 and 1336 to 1406; these read VAVQLQQQQHQ and QHPQ…QVTQ. Disordered stretches follow at residues 1320 to 1428, 1622 to 1644, 1663 to 1831, and 1846 to 2189; these read VAVQ…PMRP, MQTQ…QAQA, QKQA…GQVQ, and VQGQ…APTK. Composition is skewed to low complexity over residues 1663–1808, 1818–1831, 1846–1863, 1873–2089, and 2097–2189; these read QKQA…QGQG, GQGH…GQVQ, VQGQ…PQHA, QHAQ…QPQQ, and SQPQ…APTK.

The protein belongs to the EAF1 family. As to quaternary structure, component of the NuA4 histone acetyltransferase complex.

It is found in the nucleus. Its function is as follows. Component of the NuA4 histone acetyltransferase complex which is involved in transcriptional activation of selected genes principally by acetylation of nucleosomal histone H4 and H2A. The NuA4 complex is also involved in DNA repair. In Neurospora crassa (strain ATCC 24698 / 74-OR23-1A / CBS 708.71 / DSM 1257 / FGSC 987), this protein is Chromatin modification-related protein eaf-1 (eaf-1).